Reading from the N-terminus, the 400-residue chain is Coiled-coil domain-containing glutamate-rich protein 1 (400 aa).

Over residues 1–11 the composition is skewed to basic and acidic residues; it reads MTQTVNEREDP. Disordered regions lie at residues 1–68, 134–164, and 203–353; these read MTQT…IPGP, RPPG…PPID, and QEKL…DKFL. The span at 31–45 shows a compositional bias: basic residues; that stretch reads YHRRQRGAPMSKRRY. A compositionally biased stretch (basic and acidic residues) spans 46–57; sequence RDGPKTEYEAPR. A compositionally biased stretch (basic residues) spans 137 to 157; the sequence is GRKKRWGRRGRGLRRHPRRSF. Positions 209–220 are enriched in low complexity; the sequence is QQAALRAHQAQA. A compositionally biased stretch (polar residues) spans 255 to 271; sequence PSLTFSPAPGQQNQSPT. The segment covering 275-347 has biased composition (acidic residues); the sequence is VEEEEKNVDD…EAGLEEGEQR (73 aa). Residues 299–335 adopt a coiled-coil conformation; sequence EEEEVDGESEDEDVDEEEVEEAGNGEEREEDQEEEDV.

It localises to the nucleus. Its function is as follows. Regulator of histone epigenetic modifications and chromatin compaction into the sperm head, required for histone-to-protamine (HTP) transition. HTP is a key event in which somatic histones are first replaced by testis-specific histone variants, then transition proteins (TNPs) are incorporated into the spermatid nucleus, and finally protamines (PRMs) replace the TNPs to promote chromatin condensation. This Rattus norvegicus (Rat) protein is Coiled-coil domain-containing glutamate-rich protein 1 (Ccer1).